A 375-amino-acid polypeptide reads, in one-letter code: Meiotic driver cw27 (375 aa).

2 disordered regions span residues 1–42 (MKNK…STLP) and 74–103 (DYDE…GTTD). A compositionally biased stretch (basic and acidic residues) spans 11–29 (SMDELSTKNDNEIDLEKGP). The next 7 helical transmembrane spans lie at 108–128 (FLIK…PAVC), 145–165 (WTLI…SWCF), 172–192 (AVKV…ISLA), 208–228 (EMMI…FGCV), 245–265 (TISA…WTLW), 272–292 (LQVL…MSLF), and 336–356 (VIGF…NAIG).

It belongs to the WTF family. As to quaternary structure, homomer. Forms protein aggregates. The two isoforms can interact with each other and with themselves. High sequence similarity is required for their interaction.

The protein localises to the spore membrane. It is found in the vacuole. The protein resides in the membrane. It localises to the ascus epiplasm. Its subcellular location is the cytoplasm. The protein localises to the endoplasmic reticulum. Functionally, promotes unequal transmission of alleles from the parental zygote to progeny spores by acting as poison/antidote system where the poison and antidote proteins are produced from the same locus; the poison component is trans-acting and targets all spores within an ascus whereas the antidote component is spore-specific, leading to poisoning of all progeny that do not inherit the allele. In terms of biological role, localizes isoform 2 to the vacuole thereby facilitating its degradation. Its function is as follows. Forms toxic aggregates that disrupt spore maturation. This chain is Meiotic driver cw27, found in Schizosaccharomyces pombe (Fission yeast).